A 546-amino-acid polypeptide reads, in one-letter code: ATP synthase F(1) complex catalytic subunit beta, mitochondrial (546 aa).

A mitochondrion-targeting transit peptide spans 1–45 (MLGFVGRVAATSASGALRGLGPSPLPQVKVLLRASPAALQSARDY). N6-acetyllysine; alternate occurs at positions 123, 132, and 160. Lys-123, Lys-132, and Lys-160 each carry N6-succinyllysine; alternate. Position 197 is an N6-acetyllysine (Lys-197). Residues Gly-208, Val-209, Gly-210, Lys-211, Thr-212, and Val-213 each coordinate ADP. Gly-208 contacts ATP. Residues Gly-208, Val-209, Gly-210, Lys-211, and Thr-212 each contribute to the phosphate site. The ATP site is built by Gly-210, Lys-211, Thr-212, and Val-213. Thr-212 contributes to the Mg(2+) binding site. Mg(2+) is bound at residue Glu-237. Arg-238 contacts ATP. An N6-acetyllysine; alternate mark is found at Lys-258 and Lys-263. N6-succinyllysine; alternate is present on residues Lys-258 and Lys-263. Thr-311 bears the Phosphothreonine mark. The residue at position 425 (Lys-425) is an N6-acetyllysine. Ser-432 is modified (phosphoserine). Residues Lys-479 and Lys-484 each carry the N6-acetyllysine modification. Residue Lys-521 is modified to N6-acetyllysine; alternate. Lys-521 carries the post-translational modification N6-succinyllysine; alternate. The tract at residues 521–546 (KLAEEHSATQTSPSPKGAAAXXXRVV) is disordered.

The protein belongs to the ATPase alpha/beta chains family. In terms of assembly, homotrimer. Component of the ATP synthase complex composed at least of ATP5F1A/subunit alpha, ATP5F1B/subunit beta, ATP5MC1/subunit c (homooctomer), MT-ATP6/subunit a, MT-ATP8/subunit 8, ATP5ME/subunit e, ATP5MF/subunit f, ATP5MG/subunit g, ATP5MK/subunit k, ATP5MJ/subunit j, ATP5F1C/subunit gamma, ATP5F1D/subunit delta, ATP5F1E/subunit epsilon, ATP5PF/subunit F6, ATP5PB/subunit b, ATP5PD/subunit d, ATP5PO/subunit OSCP. ATP synthase complex consists of a soluble F(1) head domain (subunits alpha(3) and beta(3)) - the catalytic core - and a membrane F(0) domain - the membrane proton channel (subunits c, a, 8, e, f, g, k and j). These two domains are linked by a central stalk (subunits gamma, delta, and epsilon) rotating inside the F1 region and a stationary peripheral stalk (subunits F6, b, d, and OSCP). Interacts with PPIF. Interacts with BCL2L1 isoform BCL-X(L); the interaction mediates the association of BCL2L1 isoform BCL-X(L) with the mitochondrial membrane F(1)F(0) ATP synthase and enhances neurons metabolic efficiency. Interacts with CLN5 and PPT1. Interacts with S100A1; this interaction increases F1-ATPase activity. Interacts with MTLN. Interacts with TTC5/STRAP; the interaction results in decreased mitochondrial ATP production.

It localises to the mitochondrion inner membrane. It carries out the reaction ATP + H2O + 4 H(+)(in) = ADP + phosphate + 5 H(+)(out). Functionally, catalytic subunit beta, of the mitochondrial membrane ATP synthase complex (F(1)F(0) ATP synthase or Complex V) that produces ATP from ADP in the presence of a proton gradient across the membrane which is generated by electron transport complexes of the respiratory chain. ATP synthase complex consist of a soluble F(1) head domain - the catalytic core - and a membrane F(1) domain - the membrane proton channel. These two domains are linked by a central stalk rotating inside the F(1) region and a stationary peripheral stalk. During catalysis, ATP synthesis in the catalytic domain of F(1) is coupled via a rotary mechanism of the central stalk subunits to proton translocation. In vivo, can only synthesize ATP although its ATP hydrolase activity can be activated artificially in vitro. With the subunit alpha (ATP5F1A), forms the catalytic core in the F(1) domain. This chain is ATP synthase F(1) complex catalytic subunit beta, mitochondrial, found in Canis lupus familiaris (Dog).